An 867-amino-acid polypeptide reads, in one-letter code: MDESALLDLLECPVCLERLDATAKVLPCQHTFCRRCLLGIVGSRGELRCPECRTLVESGVDELPSNILLVRLLDGIKQRPRRTGSVHGTCANGSAVAGVRAQGAGGSQRDPGPTGGQSQRVQAKSTPVRGVPQLPCAKALYNYDGKEPGDLKFSKGDIIILRRQVDENWYHGEMGGVHGFFPTNFVQVIKPLPQPPPQCKALYDFELKDKEADKDCLPFSKDDILTVIRRVDENWAEGMLGDKIGIFPISYVEFNSAARQLIELDKPSEGGGDSSEGPSSSSSGPQANGSQKAPGEKKNSKKRHSFTSLTMSHKPCLAPPPQRHSMEISGPVLISSSNPTAAARIGELSGGLSSSAPSQVHICTTGLIVTPPPSSPVTTATVFTFPPETSYASIPVDALPPPPPPPPQSQSSVVGAAALNAGQRPSPAAGDQSGRQRPTVYVAMFPYSPRKEDELELRKGEMFLVLERCQDGWFKGTSMHTGKIGVFPGNYMSPVSRTVSGSSQPKVPLTLCSQAGRGVTIVSPSSALGSMDLSKPLPVCPNATPSCSLPAAVVTAAHLPTGQHPKVLMHVTSQMTVNQARNAVRTAVSHSQDRPTAAVTPIQSHNPVAYLPSTAVVLQASPVLNSSSGCSSARVGVALGCAAASLTPPNVSAASLDTDAMRPVPMVALPVNAGSTKPLGAASNHGVACRLDKDCKREKKGLLKLLSNKKKLRPSPPSSPTLEAEQSVSMELPQGAVGPEMALSGSAGHNGRIGACPMDSELSMSSSSSNTDAVTHRSSPQDNTAPIAPPPRQPCSSLLSMQHDGRPIVCERYRVVVSYPPQSEAELELKEGDIVFVHKKREDGWFKGTLQRNGRTGLFPGSFVDSI.

The segment at 12-53 (CPVCLERLDATAKVLPCQHTFCRRCLLGIVGSRGELRCPECR) adopts an RING-type zinc-finger fold. Residues 101–127 (AQGAGGSQRDPGPTGGQSQRVQAKSTP) form a disordered region. The segment covering 116–125 (GQSQRVQAKS) has biased composition (polar residues). SH3 domains lie at 132–191 (PQLP…VIKP) and 194–257 (QPPP…FNSA). Positions 265 to 328 (DKPSEGGGDS…PPPQRHSMEI (64 aa)) are disordered. Residues 275–285 (SEGPSSSSSGP) show a composition bias toward low complexity. Residues 436–497 (QRPTVYVAMF…PGNYMSPVSR (62 aa)) enclose the SH3 3 domain. The tract at residues 706 to 794 (LSNKKKLRPS…APIAPPPRQP (89 aa)) is disordered. Residues 760 to 769 (SELSMSSSSS) show a composition bias toward low complexity. Polar residues predominate over residues 770-784 (NTDAVTHRSSPQDNT). The region spanning 808-867 (IVCERYRVVVSYPPQSEAELELKEGDIVFVHKKREDGWFKGTLQRNGRTGLFPGSFVDSI) is the SH3 4 domain.

It belongs to the SH3RF family. Post-translationally, autoubiquitinated. Ubiquitinated by SH3RF2, leading to proteasome-mediated degradation.

It is found in the cytoplasm. Its subcellular location is the perinuclear region. The protein localises to the cell projection. It localises to the lamellipodium. The protein resides in the golgi apparatus. It is found in the trans-Golgi network. The catalysed reaction is S-ubiquitinyl-[E2 ubiquitin-conjugating enzyme]-L-cysteine + [acceptor protein]-L-lysine = [E2 ubiquitin-conjugating enzyme]-L-cysteine + N(6)-ubiquitinyl-[acceptor protein]-L-lysine.. The protein operates within protein modification; protein ubiquitination. Has E3 ubiquitin-protein ligase activity. In the absence of an external substrate, it can catalyze self-ubiquitination. Acts as a scaffold protein that contributes to the effective activation of the JNK signaling pathway. This is E3 ubiquitin-protein ligase SH3RF1 (sh3rf1) from Danio rerio (Zebrafish).